The following is a 338-amino-acid chain: tRNA N6-adenosine threonylcarbamoyltransferase (338 aa).

2 residues coordinate Fe cation: histidine 111 and histidine 115. Substrate contacts are provided by residues 134–138 (LVSGG), aspartate 167, glycine 180, and asparagine 272. Residue aspartate 300 participates in Fe cation binding.

This sequence belongs to the KAE1 / TsaD family. Fe(2+) is required as a cofactor.

The protein localises to the cytoplasm. It catalyses the reaction L-threonylcarbamoyladenylate + adenosine(37) in tRNA = N(6)-L-threonylcarbamoyladenosine(37) in tRNA + AMP + H(+). Its function is as follows. Required for the formation of a threonylcarbamoyl group on adenosine at position 37 (t(6)A37) in tRNAs that read codons beginning with adenine. Is involved in the transfer of the threonylcarbamoyl moiety of threonylcarbamoyl-AMP (TC-AMP) to the N6 group of A37, together with TsaE and TsaB. TsaD likely plays a direct catalytic role in this reaction. The chain is tRNA N6-adenosine threonylcarbamoyltransferase from Nitrosomonas eutropha (strain DSM 101675 / C91 / Nm57).